Here is a 445-residue protein sequence, read N- to C-terminus: Phosphoglucosamine mutase (445 aa).

Serine 102 (phosphoserine intermediate) is an active-site residue. Serine 102, aspartate 241, aspartate 243, and aspartate 245 together coordinate Mg(2+). A Phosphoserine modification is found at serine 102.

The protein belongs to the phosphohexose mutase family. Mg(2+) is required as a cofactor. Activated by phosphorylation.

The enzyme catalyses alpha-D-glucosamine 1-phosphate = D-glucosamine 6-phosphate. In terms of biological role, catalyzes the conversion of glucosamine-6-phosphate to glucosamine-1-phosphate. This chain is Phosphoglucosamine mutase, found in Salmonella dublin (strain CT_02021853).